The chain runs to 313 residues: Cytochrome c biogenesis protein CcsA (313 aa).

Helical transmembrane passes span 9–29, 44–64, 71–91, 101–121, 143–163, 217–237, 244–264, and 278–298; these read ILTHISFSIVSIVITIHLITL, GIIVTFFCITGLLVTRWISSG, LYESLIFLSWSFSLIHIIPYF, IIGPSAIFTQGFATSGILTEI, MILGYAALLCGSLLSVALLVI, VISLGFTFLTIGILSGAVWAN, WNWDPKETWAFITWIVFAIYL, and AIVASIGFLIIWICYFGVNLL.

Belongs to the CcmF/CycK/Ccl1/NrfE/CcsA family. As to quaternary structure, may interact with Ccs1.

Its subcellular location is the plastid. The protein resides in the chloroplast thylakoid membrane. Its function is as follows. Required during biogenesis of c-type cytochromes (cytochrome c6 and cytochrome f) at the step of heme attachment. The sequence is that of Cytochrome c biogenesis protein CcsA from Nicotiana tomentosiformis (Tobacco).